The primary structure comprises 184 residues: dCTP deaminase (184 aa).

Residues 107 to 112 (KSTYAR), 131 to 133 (TLE), Gln152, Tyr166, and Gln176 contribute to the dCTP site. Residue Glu133 is the Proton donor/acceptor of the active site.

The protein belongs to the dCTP deaminase family. In terms of assembly, homotrimer.

It catalyses the reaction dCTP + H2O + H(+) = dUTP + NH4(+). It functions in the pathway pyrimidine metabolism; dUMP biosynthesis; dUMP from dCTP (dUTP route): step 1/2. In terms of biological role, catalyzes the deamination of dCTP to dUTP. The sequence is that of dCTP deaminase from Rhodospirillum centenum (strain ATCC 51521 / SW).